The chain runs to 284 residues: Protease HtpX homolog (284 aa).

Helical transmembrane passes span 7-26 and 33-47; these read TYLLMALLVGLIYAICMMLH and IILALIPNVIAYYMS. Histidine 129 provides a ligand contact to Zn(2+). Glutamate 130 is an active-site residue. Zn(2+) is bound at residue histidine 133. 2 helical membrane-spanning segments follow: residues 148-168 and 180-200; these read LAGAIVMIAEWMLYWGGIFFV and IGTILLLILAPIAATIIQFAI. Glutamate 205 is a Zn(2+) binding site.

Belongs to the peptidase M48B family. The cofactor is Zn(2+).

It localises to the cell membrane. The sequence is that of Protease HtpX homolog from Methanocaldococcus jannaschii (strain ATCC 43067 / DSM 2661 / JAL-1 / JCM 10045 / NBRC 100440) (Methanococcus jannaschii).